Here is a 271-residue protein sequence, read N- to C-terminus: Phosphatidylglycerol--prolipoprotein diacylglyceryl transferase (271 aa).

4 helical membrane-spanning segments follow: residues 18 to 38, 51 to 71, 89 to 109, and 115 to 135; these read LSVH…LWMA, IFID…RAYY, IWKG…TGIV, and GISF…GQAI. Arg-137 lines the a 1,2-diacyl-sn-glycero-3-phospho-(1'-sn-glycerol) pocket. 3 helical membrane-spanning segments follow: residues 177–197, 205–225, and 236–256; these read HPTF…LLLL, GNLF…IEGM, and LRIA…LMIF.

Belongs to the Lgt family.

Its subcellular location is the cell membrane. It carries out the reaction L-cysteinyl-[prolipoprotein] + a 1,2-diacyl-sn-glycero-3-phospho-(1'-sn-glycerol) = an S-1,2-diacyl-sn-glyceryl-L-cysteinyl-[prolipoprotein] + sn-glycerol 1-phosphate + H(+). It participates in protein modification; lipoprotein biosynthesis (diacylglyceryl transfer). Catalyzes the transfer of the diacylglyceryl group from phosphatidylglycerol to the sulfhydryl group of the N-terminal cysteine of a prolipoprotein, the first step in the formation of mature lipoproteins. The polypeptide is Phosphatidylglycerol--prolipoprotein diacylglyceryl transferase (Bacillus velezensis (strain DSM 23117 / BGSC 10A6 / LMG 26770 / FZB42) (Bacillus amyloliquefaciens subsp. plantarum)).